The sequence spans 156 residues: ATP synthase subunit b (156 aa).

A helical transmembrane segment spans residues 5–25; sequence LTLIGQAIAFAFFVAFCMKFV.

It belongs to the ATPase B chain family. As to quaternary structure, F-type ATPases have 2 components, F(1) - the catalytic core - and F(0) - the membrane proton channel. F(1) has five subunits: alpha(3), beta(3), gamma(1), delta(1), epsilon(1). F(0) has three main subunits: a(1), b(2) and c(10-14). The alpha and beta chains form an alternating ring which encloses part of the gamma chain. F(1) is attached to F(0) by a central stalk formed by the gamma and epsilon chains, while a peripheral stalk is formed by the delta and b chains.

The protein localises to the cell inner membrane. Functionally, f(1)F(0) ATP synthase produces ATP from ADP in the presence of a proton or sodium gradient. F-type ATPases consist of two structural domains, F(1) containing the extramembraneous catalytic core and F(0) containing the membrane proton channel, linked together by a central stalk and a peripheral stalk. During catalysis, ATP synthesis in the catalytic domain of F(1) is coupled via a rotary mechanism of the central stalk subunits to proton translocation. In terms of biological role, component of the F(0) channel, it forms part of the peripheral stalk, linking F(1) to F(0). The protein is ATP synthase subunit b of Acinetobacter baumannii (strain AYE).